The primary structure comprises 449 residues: Na(+)/H(+) antiporter NhaA 1 (449 aa).

Transmembrane regions (helical) follow at residues 38 to 58 (GILL…PWAA), 79 to 99 (FTIR…VVGM), 117 to 137 (VLPL…YAAF), 145 to 165 (AGWA…LTLV), 175 to 195 (VFLT…IALF), 198 to 218 (SGLH…LACL), 240 to 260 (MHHG…FMPA), 311 to 331 (FVHL…ALAN), 347 to 367 (PLPL…IFLF), 390 to 410 (GVAV…GLAF), and 422 to 442 (LGIL…LRFV).

The protein belongs to the NhaA Na(+)/H(+) (TC 2.A.33) antiporter family.

The protein localises to the cell inner membrane. It catalyses the reaction Na(+)(in) + 2 H(+)(out) = Na(+)(out) + 2 H(+)(in). Na(+)/H(+) antiporter that extrudes sodium in exchange for external protons. This Myxococcus xanthus (strain DK1622) protein is Na(+)/H(+) antiporter NhaA 1.